Here is a 261-residue protein sequence, read N- to C-terminus: Probable trans-aconitate 2-methyltransferase (261 aa).

This sequence belongs to the methyltransferase superfamily. Tam family.

Its subcellular location is the cytoplasm. It catalyses the reaction trans-aconitate + S-adenosyl-L-methionine = (E)-3-(methoxycarbonyl)pent-2-enedioate + S-adenosyl-L-homocysteine. Its function is as follows. Catalyzes the S-adenosylmethionine monomethyl esterification of trans-aconitate. This chain is Probable trans-aconitate 2-methyltransferase, found in Mycobacterium bovis (strain ATCC BAA-935 / AF2122/97).